Reading from the N-terminus, the 204-residue chain is Holliday junction branch migration complex subunit RuvA (204 aa).

The domain I stretch occupies residues 1–64 (MIGHLTGRLV…EDAHLLFGFS (64 aa)). Residues 65-143 (QKTDRTLFRE…GIQQEDFFIE (79 aa)) are domain II. The interval 144–155 (SQHLKQPEHALN) is flexible linker. Residues 156–204 (EQDIPASEAISALIALGYKAAEAEKLVKKISKPALSSEQLIREALKAAL) form a domain III region.

This sequence belongs to the RuvA family. As to quaternary structure, homotetramer. Forms an RuvA(8)-RuvB(12)-Holliday junction (HJ) complex. HJ DNA is sandwiched between 2 RuvA tetramers; dsDNA enters through RuvA and exits via RuvB. An RuvB hexamer assembles on each DNA strand where it exits the tetramer. Each RuvB hexamer is contacted by two RuvA subunits (via domain III) on 2 adjacent RuvB subunits; this complex drives branch migration. In the full resolvosome a probable DNA-RuvA(4)-RuvB(12)-RuvC(2) complex forms which resolves the HJ.

Its subcellular location is the cytoplasm. Functionally, the RuvA-RuvB-RuvC complex processes Holliday junction (HJ) DNA during genetic recombination and DNA repair, while the RuvA-RuvB complex plays an important role in the rescue of blocked DNA replication forks via replication fork reversal (RFR). RuvA specifically binds to HJ cruciform DNA, conferring on it an open structure. The RuvB hexamer acts as an ATP-dependent pump, pulling dsDNA into and through the RuvAB complex. HJ branch migration allows RuvC to scan DNA until it finds its consensus sequence, where it cleaves and resolves the cruciform DNA. This chain is Holliday junction branch migration complex subunit RuvA, found in Pasteurella multocida (strain Pm70).